A 126-amino-acid chain; its full sequence is Large ribosomal subunit protein bL12 (126 aa).

The protein belongs to the bacterial ribosomal protein bL12 family. As to quaternary structure, homodimer. Part of the ribosomal stalk of the 50S ribosomal subunit. Forms a multimeric L10(L12)X complex, where L10 forms an elongated spine to which 2 to 4 L12 dimers bind in a sequential fashion. Binds GTP-bound translation factors.

Its function is as follows. Forms part of the ribosomal stalk which helps the ribosome interact with GTP-bound translation factors. Is thus essential for accurate translation. This is Large ribosomal subunit protein bL12 from Tropheryma whipplei (strain TW08/27) (Whipple's bacillus).